Consider the following 196-residue polypeptide: MIPLVLEESGGSERVFDIYSRLLRERIIFLGEQVTSDTANRIVAQLLFLEAEDPEKDIYMYINSPGGSVYDGLGIFDTMQHVKPDIHTVCVGLAASMGAFLLAAGTKGKRSSLRHSRIMIHQPLGGARGQASDIRIQADEILYLKERLNTELSERTGKELETIKGDTDRDFYMSPQEAVEYGLIDLVLDKKPVKNI.

Serine 96 acts as the Nucleophile in catalysis. The active site involves histidine 121.

The protein belongs to the peptidase S14 family. In terms of assembly, fourteen ClpP subunits assemble into 2 heptameric rings which stack back to back to give a disk-like structure with a central cavity, resembling the structure of eukaryotic proteasomes.

It is found in the cytoplasm. The catalysed reaction is Hydrolysis of proteins to small peptides in the presence of ATP and magnesium. alpha-casein is the usual test substrate. In the absence of ATP, only oligopeptides shorter than five residues are hydrolyzed (such as succinyl-Leu-Tyr-|-NHMec, and Leu-Tyr-Leu-|-Tyr-Trp, in which cleavage of the -Tyr-|-Leu- and -Tyr-|-Trp bonds also occurs).. Functionally, cleaves peptides in various proteins in a process that requires ATP hydrolysis. Has a chymotrypsin-like activity. Plays a major role in the degradation of misfolded proteins. The chain is ATP-dependent Clp protease proteolytic subunit 1 from Prochlorococcus marinus subsp. pastoris (strain CCMP1986 / NIES-2087 / MED4).